The sequence spans 237 residues: ADTIVAVELDTYPNTDIGDPNYPHIGIDIKSIRSKKIAKWNMQDGKVATAHIIYNSVGKRLSAVVSYPNADSATVSYDVDLDNVLPEWVRVGLSATTGLYKETNTILSWSFTSKLKSNSTAETNALHFTFNQFTKDQKDLILQGDATTDSDGNLQLTRVSSDGTPQGNSVGRALFYAPVHIWESSAVVASFDATFTFLIKSPDSDPADGITFFISNMDSTIPSGSGGRLLGLFPDAN.

Positions 8 and 10 each coordinate Mn(2+). 4 residues coordinate Ca(2+): aspartate 10, tyrosine 12, asparagine 14, and aspartate 19. Position 14 (asparagine 14) interacts with a carbohydrate. Mn(2+)-binding residues include aspartate 19 and histidine 24. A carbohydrate is bound by residues leucine 99, tyrosine 100, aspartate 208, and arginine 228.

Belongs to the leguminous lectin family. As to quaternary structure, homotetramer; dimer of dimers. Post-translationally, concanavalin A-like lectins of the Diocleinae subtribe undergo proteolytic processing referred to as circular permutation. The propeptide is split into an N-terminal and a C-terminal part, the gamma and beta chain, respectively. These are then religated in beta-gamma order to form the mature alpha chain. The beta and gamma chains can often be detected in cell extracts. Residues 1-118 of the mature chain, as displayed here, probably constitute the beta chain in the propeptide, residues 119-237 the gamma chain.

In terms of biological role, lectin. Induces paw edema in mice. Has a weak vasorelaxant effect on rat aorta. Has anti-inflammatory and anti-nociceptive effects. This chain is Lectin ConGF, found in Canavalia grandiflora (Jackbean).